A 291-amino-acid polypeptide reads, in one-letter code: 33 kDa chaperonin (291 aa).

Intrachain disulfides connect cysteine 229-cysteine 231 and cysteine 262-cysteine 265.

This sequence belongs to the HSP33 family. Post-translationally, under oxidizing conditions two disulfide bonds are formed involving the reactive cysteines. Under reducing conditions zinc is bound to the reactive cysteines and the protein is inactive.

It is found in the cytoplasm. Redox regulated molecular chaperone. Protects both thermally unfolding and oxidatively damaged proteins from irreversible aggregation. Plays an important role in the bacterial defense system toward oxidative stress. This chain is 33 kDa chaperonin, found in Vibrio parahaemolyticus serotype O3:K6 (strain RIMD 2210633).